We begin with the raw amino-acid sequence, 1032 residues long: GPI inositol-deacylase (1032 aa).

Residue asparagine 12 is glycosylated (N-linked (GlcNAc...) asparagine). Residues 15-35 traverse the membrane as a helical segment; the sequence is ILTLVSFFGLVLFYLTWYLYT. Serine 195 is an active-site residue. Residues asparagine 520 and asparagine 555 are each glycosylated (N-linked (GlcNAc...) asparagine). The next 2 helical transmembrane spans lie at 703 to 723 and 740 to 760; these read LATI…QVKH and ICSP…TPIM. Asparagine 784 carries an N-linked (GlcNAc...) asparagine glycan. 3 helical membrane passes run 805-825, 861-880, and 884-903; these read LWFI…LTFY, WANR…PIYM, and FAYV…ILVA. The N-linked (GlcNAc...) asparagine glycan is linked to asparagine 907. A helical transmembrane segment spans residues 916 to 936; that stretch reads SLLMLMLWVLPINVPILVVFV. Asparagine 938 and asparagine 942 each carry an N-linked (GlcNAc...) asparagine glycan. 2 helical membrane passes run 943–963 and 985–1005; these read WTTP…ILLM and AFLA…TYWI.

Belongs to the GPI inositol-deacylase family.

It localises to the endoplasmic reticulum membrane. Its function is as follows. Involved in inositol deacylation of GPI-anchored proteins which plays important roles in the quality control and ER-associated degradation of GPI-anchored proteins. The polypeptide is GPI inositol-deacylase (BST1) (Debaryomyces hansenii (strain ATCC 36239 / CBS 767 / BCRC 21394 / JCM 1990 / NBRC 0083 / IGC 2968) (Yeast)).